The following is a 372-amino-acid chain: MKQLPILEPGDKPRKAAWYTLTCPGDKPCPRVGHSCSYFPPVGEAEKGKVFIVGGANPNQSFSDVHTMDLGTHRWDTATREGLLPRYEHASFLPSCSPHSIWVFGGADQSGNRNCLQVMNPEARTWSTPEVTGCPPSPRTFHTSSAAIGNHLYVFGGGERGAQPVQDVKLHVFDANTLTWAQPETHGSPPSPRHGHAMVAAGTKLFIHGGLAGDRFFDDLHCIDIGDMSWQKLGPTGTAPVGCAAHAAVAVGHHVYVFGGMTATGALNTMYKYHTEKQHWTILQFDTSLPPGRLDHSMCVIPWPVMSASDTEDSGSVILSLQDEKGDAAEKPETRSGGSREESPTTLLLCFVFGGMNTEGEIYDDCLVTVVD.

5 Kelch repeats span residues 49 to 95 (KVFI…FLPS), 100 to 146 (SIWV…TSSA), 151 to 203 (HLYV…AAGT), 204 to 250 (KLFI…AAVA), and 254 to 303 (HVYV…VIPW). A disordered region spans residues 321–342 (LQDEKGDAAEKPETRSGGSREE). The segment covering 322–342 (QDEKGDAAEKPETRSGGSREE) has biased composition (basic and acidic residues). The Kelch 6 repeat unit spans residues 349 to 372 (LCFVFGGMNTEGEIYDDCLVTVVD).

Interacts with PIKFYVE; the interaction recruits RABEPK to the endosomal membrane. Interacts with RAB9 in its GTP-bound conformation. Post-translationally, phosphorylated on Ser residues by PIKFYVE.

The protein resides in the cytoplasm. It localises to the endosome membrane. In terms of biological role, rab9 effector required for endosome to trans-Golgi network (TGN) transport. The chain is Rab9 effector protein with kelch motifs (Rabepk) from Rattus norvegicus (Rat).